The chain runs to 443 residues: Exodeoxyribonuclease 7 large subunit (443 aa).

It belongs to the XseA family. Heterooligomer composed of large and small subunits.

It localises to the cytoplasm. The catalysed reaction is Exonucleolytic cleavage in either 5'- to 3'- or 3'- to 5'-direction to yield nucleoside 5'-phosphates.. Bidirectionally degrades single-stranded DNA into large acid-insoluble oligonucleotides, which are then degraded further into small acid-soluble oligonucleotides. In Stenotrophomonas maltophilia (strain R551-3), this protein is Exodeoxyribonuclease 7 large subunit.